A 432-amino-acid polypeptide reads, in one-letter code: Enolase (432 aa).

Gln-167 provides a ligand contact to (2R)-2-phosphoglycerate. The active-site Proton donor is Glu-209. Asp-246, Glu-290, and Asp-317 together coordinate Mg(2+). Residues Lys-342, Arg-371, Ser-372, and Lys-393 each contribute to the (2R)-2-phosphoglycerate site. Lys-342 (proton acceptor) is an active-site residue.

This sequence belongs to the enolase family. In terms of assembly, component of the RNA degradosome, a multiprotein complex involved in RNA processing and mRNA degradation. The cofactor is Mg(2+).

Its subcellular location is the cytoplasm. It localises to the secreted. It is found in the cell surface. It carries out the reaction (2R)-2-phosphoglycerate = phosphoenolpyruvate + H2O. The protein operates within carbohydrate degradation; glycolysis; pyruvate from D-glyceraldehyde 3-phosphate: step 4/5. In terms of biological role, catalyzes the reversible conversion of 2-phosphoglycerate (2-PG) into phosphoenolpyruvate (PEP). It is essential for the degradation of carbohydrates via glycolysis. This chain is Enolase, found in Shigella sonnei (strain Ss046).